Reading from the N-terminus, the 234-residue chain is UDP-2,3-diacylglucosamine hydrolase (234 aa).

Mn(2+)-binding residues include Asp9, His11, Asp42, Asn80, and His115. 80–81 lines the substrate pocket; the sequence is NR. Residues Asp123, Ser161, Lys165, Lys168, and His196 each contribute to the substrate site. Residues His196 and His198 each coordinate Mn(2+).

Belongs to the LpxH family. The cofactor is Mn(2+).

The protein localises to the cell inner membrane. It carries out the reaction UDP-2-N,3-O-bis[(3R)-3-hydroxytetradecanoyl]-alpha-D-glucosamine + H2O = 2-N,3-O-bis[(3R)-3-hydroxytetradecanoyl]-alpha-D-glucosaminyl 1-phosphate + UMP + 2 H(+). It participates in glycolipid biosynthesis; lipid IV(A) biosynthesis; lipid IV(A) from (3R)-3-hydroxytetradecanoyl-[acyl-carrier-protein] and UDP-N-acetyl-alpha-D-glucosamine: step 4/6. Its function is as follows. Hydrolyzes the pyrophosphate bond of UDP-2,3-diacylglucosamine to yield 2,3-diacylglucosamine 1-phosphate (lipid X) and UMP by catalyzing the attack of water at the alpha-P atom. Involved in the biosynthesis of lipid A, a phosphorylated glycolipid that anchors the lipopolysaccharide to the outer membrane of the cell. The polypeptide is UDP-2,3-diacylglucosamine hydrolase (Histophilus somni (strain 2336) (Haemophilus somnus)).